The chain runs to 713 residues: Phenylalanine--tRNA ligase beta subunit (713 aa).

The region spanning 39 to 153 is the tRNA-binding domain; the sequence is IRHVENIKYG…EANLNEDPIA (115 aa). One can recognise a B5 domain in the interval 379–454; the sequence is LKPKEILFDH…RFYGYDNFPI (76 aa). Mg(2+) contacts are provided by aspartate 432, aspartate 438, glutamate 441, and glutamate 442.

The protein belongs to the phenylalanyl-tRNA synthetase beta subunit family. Type 1 subfamily. Tetramer of two alpha and two beta subunits. Mg(2+) is required as a cofactor.

It is found in the cytoplasm. It catalyses the reaction tRNA(Phe) + L-phenylalanine + ATP = L-phenylalanyl-tRNA(Phe) + AMP + diphosphate + H(+). This is Phenylalanine--tRNA ligase beta subunit from Mycoplasma mobile (strain ATCC 43663 / 163K / NCTC 11711) (Mesomycoplasma mobile).